A 368-amino-acid polypeptide reads, in one-letter code: MSDNSQKKVIVGMSGGVDSSVSAYLLQQQGYHVEGLFMKNWEEDDDTEYCSAATDLADAQAVCDKLGIELHTVNFAAEYWDNVFELFLEEYKAGRTPNPDILCNKEIKFKAFLEFAAEDLGADYIATGHYVRRHDVDGKSRLLRGMDGNKDQSYFLYTLSHEQIAQSLFPVGELEKPQVRKIAEELELATAKKKDSTGICFIGERKFTDFLARYLPAQPGPILSVDDNKPMGQHQGLMYHTLGQRKGLGIGGVKDGGEDPWYVVDKDVANNILYVAQGHEHPRLMSHGLIAQQLHWVDRQPLTAELRCTVKTRYRQADIPCTVTPLGDDRITVRFDEPVAAVTPGQSAVFYLDDVCLGGGIIEERLQE.

ATP-binding positions include 12-19 and Met38; that span reads GMSGGVDS. The tract at residues 98–100 is interaction with target base in tRNA; sequence NPD. Cys103 serves as the catalytic Nucleophile. Cys103 and Cys200 are oxidised to a cystine. An ATP-binding site is contributed by Gly128. The tract at residues 150-152 is interaction with tRNA; the sequence is KDQ. Cys200 serves as the catalytic Cysteine persulfide intermediate. Residues 313–314 form an interaction with tRNA region; that stretch reads RY.

The protein belongs to the MnmA/TRMU family. Interacts with TusE.

It localises to the cytoplasm. It catalyses the reaction S-sulfanyl-L-cysteinyl-[protein] + uridine(34) in tRNA + AH2 + ATP = 2-thiouridine(34) in tRNA + L-cysteinyl-[protein] + A + AMP + diphosphate + H(+). Its function is as follows. Catalyzes the 2-thiolation of uridine at the wobble position (U34) of tRNA(Lys), tRNA(Glu) and tRNA(Gln), leading to the formation of s(2)U34, the first step of tRNA-mnm(5)s(2)U34 synthesis. Sulfur is provided by IscS, via a sulfur-relay system. Binds ATP and its substrate tRNAs. In Pectobacterium carotovorum subsp. carotovorum (strain PC1), this protein is tRNA-specific 2-thiouridylase MnmA.